Consider the following 811-residue polypeptide: Potassium transporter 27 (811 aa).

The Cytoplasmic segment spans residues 1–64 (MGDDVLGRGS…QEESWARTLK (64 aa)). Residues 65 to 85 (LAFQCVGILYGDIGTSPLFVY) form a helical membrane-spanning segment. Topologically, residues 86 to 102 (SSTFKDGVRHPDDLLGA) are extracellular. The helical transmembrane segment at 103–123 (LSLIIYSFALFTIVKYVFIAL) threads the bilayer. The Cytoplasmic portion of the chain corresponds to 124–188 (RANDDGDGGT…ELLETNRAVK (65 aa)). A helical membrane pass occupies residues 189–209 (IWLFLLTILATAMVISDAVLT). Over 210-226 (PAISVLSAVGGLKEKAP) the chain is Extracellular. The chain crosses the membrane as a helical span at residues 227–247 (NLTTDEIVWITVATLVVLFAI). At 248–254 (QRFGTDK) the chain is on the cytoplasmic side. Residues 255–275 (IGYLFAPIILLWLLLIGCVGI) traverse the membrane as a helical segment. Topologically, residues 276–310 (YNTIKFDTGVLRAFNLKYIIDYFRRNKKDGWISLS) are extracellular. A helical transmembrane segment spans residues 311–331 (GILLCFTGTEALFSDLGYFSI). Residues 332–335 (RSIQ) are Cytoplasmic-facing. Residues 336–356 (LSFSFGLVPSVLLAYIGQAAY) traverse the membrane as a helical segment. Residues 357 to 375 (LREHPEHIANTFYRSTPNV) are Extracellular-facing. Residues 376 to 396 (MFWPTFILAVAASIIGSQAMI) form a helical membrane-spanning segment. At 397–434 (SCAFATISHLQTLNCFPRVKILHTSRQYSGQLYIPEVN) the chain is on the cytoplasmic side. Residues 435–455 (FLLCVGACLVTIGFKTTVIIG) traverse the membrane as a helical segment. Over 456 to 459 (EAHA) the chain is Extracellular. The helical transmembrane segment at 460-480 (ICVVFVMIITTLLLTIVMLLV) threads the bilayer. Residues 481–482 (WK) are Cytoplasmic-facing. The chain crosses the membrane as a helical span at residues 483–503 (VSIWYVALFFIVFMSSESIYL). Over 504–515 (SAVLYQFVHGEY) the chain is Extracellular. A helical transmembrane segment spans residues 516–536 (VPVAMSVFLMIVMTVWHYVHV). At 537–811 (KRYEFELEHT…VLKVGIAYEI (275 aa)) the chain is on the cytoplasmic side.

This sequence belongs to the HAK/KUP transporter (TC 2.A.72.3) family.

It localises to the membrane. In terms of biological role, high-affinity potassium transporter. This is Potassium transporter 27 (HAK27) from Oryza sativa subsp. japonica (Rice).